The chain runs to 152 residues: Nucleoside diphosphate kinase (152 aa).

Residues Lys11, Phe59, Arg87, Thr93, Arg104, and Asn114 each coordinate ATP. Residue His117 is the Pros-phosphohistidine intermediate of the active site.

It belongs to the NDK family. Homotetramer. Mg(2+) serves as cofactor.

The protein localises to the cytoplasm. The enzyme catalyses a 2'-deoxyribonucleoside 5'-diphosphate + ATP = a 2'-deoxyribonucleoside 5'-triphosphate + ADP. It catalyses the reaction a ribonucleoside 5'-diphosphate + ATP = a ribonucleoside 5'-triphosphate + ADP. Its function is as follows. Major role in the synthesis of nucleoside triphosphates other than ATP. The ATP gamma phosphate is transferred to the NDP beta phosphate via a ping-pong mechanism, using a phosphorylated active-site intermediate. The chain is Nucleoside diphosphate kinase from Prochlorococcus marinus (strain MIT 9515).